Here is a 142-residue protein sequence, read N- to C-terminus: Large ribosomal subunit protein uL13 (142 aa).

The protein belongs to the universal ribosomal protein uL13 family. In terms of assembly, part of the 50S ribosomal subunit.

Its function is as follows. This protein is one of the early assembly proteins of the 50S ribosomal subunit, although it is not seen to bind rRNA by itself. It is important during the early stages of 50S assembly. The polypeptide is Large ribosomal subunit protein uL13 (Photorhabdus laumondii subsp. laumondii (strain DSM 15139 / CIP 105565 / TT01) (Photorhabdus luminescens subsp. laumondii)).